The primary structure comprises 160 residues: SsrA-binding protein (160 aa).

It belongs to the SmpB family.

Its subcellular location is the cytoplasm. Its function is as follows. Required for rescue of stalled ribosomes mediated by trans-translation. Binds to transfer-messenger RNA (tmRNA), required for stable association of tmRNA with ribosomes. tmRNA and SmpB together mimic tRNA shape, replacing the anticodon stem-loop with SmpB. tmRNA is encoded by the ssrA gene; the 2 termini fold to resemble tRNA(Ala) and it encodes a 'tag peptide', a short internal open reading frame. During trans-translation Ala-aminoacylated tmRNA acts like a tRNA, entering the A-site of stalled ribosomes, displacing the stalled mRNA. The ribosome then switches to translate the ORF on the tmRNA; the nascent peptide is terminated with the 'tag peptide' encoded by the tmRNA and targeted for degradation. The ribosome is freed to recommence translation, which seems to be the essential function of trans-translation. The sequence is that of SsrA-binding protein from Actinobacillus succinogenes (strain ATCC 55618 / DSM 22257 / CCUG 43843 / 130Z).